The primary structure comprises 388 residues: Histone H2A.Y (388 aa).

LRR repeat units lie at residues 54–75, 76–96, and 100–121; these read SLQM…PHVP, SLIR…QYLR, and HLQT…KRLG. Positions 134–172 constitute an LRRCT domain; sequence NPVVNTNNYRNLVFNLFPSLVILDTLDKNGIDQEKAALD. The disordered stretch occupies residues 256–279; sequence RKAPASRNGGVPSKAGKGKMNAFS.

It belongs to the histone H2A family. As to quaternary structure, the nucleosome is a histone octamer containing two molecules each of H2A, H2B, H3 and H4 assembled in one H3-H4 heterotetramer and two H2A-H2B heterodimers. The octamer wraps approximately 147 bp of DNA.

It localises to the nucleus. Its subcellular location is the chromosome. In terms of biological role, variant histone H2A which replaces conventional H2A in a subset of nucleosomes. Nucleosomes wrap and compact DNA into chromatin, limiting DNA accessibility to the cellular machineries which require DNA as a template. Histones thereby play a central role in transcription regulation, DNA repair, DNA replication and chromosomal stability. DNA accessibility is regulated via a complex set of post-translational modifications of histones, also called histone code, and nucleosome remodeling. In Tetrahymena thermophila (strain SB210), this protein is Histone H2A.Y (HTAY).